Reading from the N-terminus, the 70-residue chain is MRAIISLLLISAMVFYIIAAVPEEEGLQLSEDERGGCLPHNRFCNALSGPRCCSGLRCKELSIRDSRCLG.

An N-terminal signal peptide occupies residues 1–20 (MRAIISLLLISAMVFYIIAA). Positions 21-34 (VPEEEGLQLSEDER) are excised as a propeptide. 3 disulfides stabilise this stretch: cysteine 37–cysteine 53, cysteine 44–cysteine 58, and cysteine 52–cysteine 68. Leucine 69 bears the Leucine amide mark.

It belongs to the neurotoxin 01 (U2-agtx) family. In terms of tissue distribution, expressed by the venom gland.

The protein localises to the secreted. Functionally, insect active toxin causing rapid but reversible paralysis in crickets. No activity shown in mammals. Does not show effect on mammalian voltage-gated calcium channels. The chain is U2-agatoxin-Ao1n from Agelena orientalis (Funnel-web spider).